The following is a 289-amino-acid chain: Inorganic pyrophosphatase (289 aa).

Residue Ser2 is modified to N-acetylserine. At Lys57 the chain carries N6-acetyllysine. Mg(2+) is bound by residues Asp116, Asp121, and Asp153. The residue at position 228 (Lys228) is an N6-acetyllysine. Ser250 is subject to Phosphoserine.

This sequence belongs to the PPase family. In terms of assembly, homodimer. Requires Mg(2+) as cofactor.

It is found in the cytoplasm. It catalyses the reaction diphosphate + H2O = 2 phosphate + H(+). This Mus musculus (Mouse) protein is Inorganic pyrophosphatase (Ppa1).